A 98-amino-acid chain; its full sequence is Pancreatic polypeptide prohormone (98 aa).

The N-terminal stretch at 1–29 (MAVAYYCLSLFLLSTWVALLLQPLQGAWG) is a signal peptide. Residue Tyr-65 is modified to Tyrosine amide.

The protein belongs to the NPY family. No icosapeptide-like peptide is cleaved from the C-terminal.

The protein resides in the secreted. Hormone secreted by pancreatic cells that acts as a regulator of pancreatic and gastrointestinal functions probably by signaling through the G protein-coupled receptor NPY4R2. This Rattus norvegicus (Rat) protein is Pancreatic polypeptide prohormone (Ppy).